Consider the following 1028-residue polypeptide: Pro-apoptotic serine protease nma111 (1028 aa).

Positions 1-46 (MDLNGETSTKRKRSSVAAPAERPAKHLKPESSTLTPGDATPANGTV) are disordered. A serine protease region spans residues 82 to 266 (VVSIHFCQTC…AATDYFLPLD (185 aa)). Active-site charge relay system residues include His120, Asp151, and Ser233. PDZ domains lie at 305–377 (PEWE…QRGG) and 876–957 (VFCG…VTFD). Residues 989–1028 (TVSHDRDRHKDGITPDAANLNPDAMDEVYEEVSDVEPEVD) form a disordered region. Residues 990-1001 (VSHDRDRHKDGI) are compositionally biased toward basic and acidic residues. Acidic residues predominate over residues 1012–1028 (AMDEVYEEVSDVEPEVD).

It belongs to the peptidase S1C family.

The protein localises to the nucleus. Its function is as follows. Nuclear serine protease which mediates apoptosis. This Neosartorya fischeri (strain ATCC 1020 / DSM 3700 / CBS 544.65 / FGSC A1164 / JCM 1740 / NRRL 181 / WB 181) (Aspergillus fischerianus) protein is Pro-apoptotic serine protease nma111 (nma111).